Here is a 385-residue protein sequence, read N- to C-terminus: Zinc finger protein B385R (385 aa).

A C2H2-type zinc finger spans residues 166-190 (LQCPNCGCIQELMGTIFDETHFYNH).

Belongs to the asfivirus B385R family.

In Ornithodoros (relapsing fever ticks), this protein is Zinc finger protein B385R.